The chain runs to 330 residues: DNA primase small subunit PriS (330 aa).

Catalysis depends on residues Asp101 and Asp103. Zn(2+)-binding residues include Cys116, Cys119, Cys128, and Asp131. Asp235 is an active-site residue.

It belongs to the eukaryotic-type primase small subunit family. Heterodimer of a small subunit (PriS) and a large subunit (PriL). Mg(2+) serves as cofactor. Mn(2+) is required as a cofactor.

In terms of biological role, catalytic subunit of DNA primase, an RNA polymerase that catalyzes the synthesis of short RNA molecules used as primers for DNA polymerase during DNA replication. The small subunit contains the primase catalytic core and has DNA synthesis activity on its own. Binding to the large subunit stabilizes and modulates the activity, increasing the rate of DNA synthesis while decreasing the length of the DNA fragments, and conferring RNA synthesis capability. The DNA polymerase activity may enable DNA primase to also catalyze primer extension after primer synthesis. May also play a role in DNA repair. The protein is DNA primase small subunit PriS of Saccharolobus islandicus (strain Y.N.15.51 / Yellowstone #2) (Sulfolobus islandicus).